The following is a 195-amino-acid chain: Auxin-responsive protein IAA14 (195 aa).

Disordered regions lie at residues 1–61 (MAAE…SPAS) and 85–107 (STAA…NKGG). Residues 10 to 14 (LRLGL) carry the EAR-like (transcriptional repression) motif. In terms of domain architecture, PB1 spans 108–191 (GLYVKVSMDG…SCKKLRIMRG (84 aa)).

Belongs to the Aux/IAA family. As to quaternary structure, homodimers and heterodimers. As to expression, highly expressed in flowers. Expressed in etiolated seedlings.

Its subcellular location is the nucleus. Its function is as follows. Aux/IAA proteins are short-lived transcriptional factors that function as repressors of early auxin response genes at low auxin concentrations. This Oryza sativa subsp. japonica (Rice) protein is Auxin-responsive protein IAA14 (IAA14).